The primary structure comprises 24 residues: Erythromycin resistance leader peptide (24 aa).

Over residues 1-14 (MSMGIAARPPRAAL) the composition is skewed to low complexity. The segment at 1-24 (MSMGIAARPPRAALLPPPSVPRSR) is disordered. Pro residues predominate over residues 15 to 24 (LPPPSVPRSR).

Its function is as follows. This peptide is involved in the control mechanism of the synthesis of the macrolide-lincosamide-streptogramin B resistance protein. In Streptomyces fradiae (Streptomyces roseoflavus), this protein is Erythromycin resistance leader peptide.